Reading from the N-terminus, the 299-residue chain is MTKIKIVVIVGPTAVGKTALGISLAKALNGEIISGDSQQVYRQLDVGTAKATQEEQEAAVHHLIDIREVTESYSAYEFVQDAQKAISDIVSRGKLPIIVGGTGLYLQSLLEGYHLGGQVDQEAVKAYRQELDQLSDQEVYELLQVKSITIKQLNRRRAIRALELSQFADDLENAETAYEPLIIGLNDDRQVIYDRINQRVDRMLENGLLEEAKWLYEHYPTVQASRGIGYKELFPYFVGEMTLAEASDQLKQNTRRFAKRQLTWFRNRMAVNFTAITAPDYPQVVHDRVRDFLGQKEKS.

11–18 contributes to the ATP binding site; the sequence is GPTAVGKT. 13-18 serves as a coordination point for substrate; it reads TAVGKT. The tract at residues 36-39 is interaction with substrate tRNA; it reads DSQQ.

Belongs to the IPP transferase family. In terms of assembly, monomer. The cofactor is Mg(2+).

It catalyses the reaction adenosine(37) in tRNA + dimethylallyl diphosphate = N(6)-dimethylallyladenosine(37) in tRNA + diphosphate. Functionally, catalyzes the transfer of a dimethylallyl group onto the adenine at position 37 in tRNAs that read codons beginning with uridine, leading to the formation of N6-(dimethylallyl)adenosine (i(6)A). In Streptococcus pyogenes serotype M6 (strain ATCC BAA-946 / MGAS10394), this protein is tRNA dimethylallyltransferase.